Reading from the N-terminus, the 356-residue chain is UDP-N-acetylglucosamine--N-acetylmuramyl-(pentapeptide) pyrophosphoryl-undecaprenol N-acetylglucosamine transferase (356 aa).

UDP-N-acetyl-alpha-D-glucosamine-binding positions include 15–17 (TGG), Asn-127, Arg-163, Ser-191, Ile-244, 263–268 (ALTVSE), and Gln-288.

The protein belongs to the glycosyltransferase 28 family. MurG subfamily.

The protein localises to the cell inner membrane. It carries out the reaction di-trans,octa-cis-undecaprenyl diphospho-N-acetyl-alpha-D-muramoyl-L-alanyl-D-glutamyl-meso-2,6-diaminopimeloyl-D-alanyl-D-alanine + UDP-N-acetyl-alpha-D-glucosamine = di-trans,octa-cis-undecaprenyl diphospho-[N-acetyl-alpha-D-glucosaminyl-(1-&gt;4)]-N-acetyl-alpha-D-muramoyl-L-alanyl-D-glutamyl-meso-2,6-diaminopimeloyl-D-alanyl-D-alanine + UDP + H(+). It functions in the pathway cell wall biogenesis; peptidoglycan biosynthesis. In terms of biological role, cell wall formation. Catalyzes the transfer of a GlcNAc subunit on undecaprenyl-pyrophosphoryl-MurNAc-pentapeptide (lipid intermediate I) to form undecaprenyl-pyrophosphoryl-MurNAc-(pentapeptide)GlcNAc (lipid intermediate II). The protein is UDP-N-acetylglucosamine--N-acetylmuramyl-(pentapeptide) pyrophosphoryl-undecaprenol N-acetylglucosamine transferase of Klebsiella pneumoniae (strain 342).